The chain runs to 116 residues: Holo-[acyl-carrier-protein] synthase (116 aa).

Mg(2+) is bound by residues Asp-5 and Glu-50.

The protein belongs to the P-Pant transferase superfamily. AcpS family. It depends on Mg(2+) as a cofactor.

It localises to the cytoplasm. The enzyme catalyses apo-[ACP] + CoA = holo-[ACP] + adenosine 3',5'-bisphosphate + H(+). Functionally, transfers the 4'-phosphopantetheine moiety from coenzyme A to a Ser of acyl-carrier-protein. The chain is Holo-[acyl-carrier-protein] synthase from Campylobacter lari (strain RM2100 / D67 / ATCC BAA-1060).